Consider the following 386-residue polypeptide: 4-hydroxy-3-methylbut-2-en-1-yl diphosphate synthase (flavodoxin) (386 aa).

Residues Cys281, Cys284, Cys316, and Glu323 each coordinate [4Fe-4S] cluster.

It belongs to the IspG family. [4Fe-4S] cluster is required as a cofactor.

The enzyme catalyses (2E)-4-hydroxy-3-methylbut-2-enyl diphosphate + oxidized [flavodoxin] + H2O + 2 H(+) = 2-C-methyl-D-erythritol 2,4-cyclic diphosphate + reduced [flavodoxin]. The protein operates within isoprenoid biosynthesis; isopentenyl diphosphate biosynthesis via DXP pathway; isopentenyl diphosphate from 1-deoxy-D-xylulose 5-phosphate: step 5/6. Its function is as follows. Converts 2C-methyl-D-erythritol 2,4-cyclodiphosphate (ME-2,4cPP) into 1-hydroxy-2-methyl-2-(E)-butenyl 4-diphosphate. In Corynebacterium jeikeium (strain K411), this protein is 4-hydroxy-3-methylbut-2-en-1-yl diphosphate synthase (flavodoxin).